The sequence spans 368 residues: Peptide chain release factor 2 (368 aa).

Q250 carries the post-translational modification N5-methylglutamine.

This sequence belongs to the prokaryotic/mitochondrial release factor family. In terms of processing, methylated by PrmC. Methylation increases the termination efficiency of RF2.

The protein resides in the cytoplasm. In terms of biological role, peptide chain release factor 2 directs the termination of translation in response to the peptide chain termination codons UGA and UAA. The sequence is that of Peptide chain release factor 2 from Rickettsia africae (strain ESF-5).